The chain runs to 1046 residues: UDP-N-acetylglucosamine--peptide N-acetylglucosaminyltransferase 110 kDa subunit (1046 aa).

Residue Ala-2 is modified to N-acetylalanine. Ser-3 and Ser-4 each carry phosphoserine; by GSK3-beta; alternate. Residues Ser-3 and Ser-4 are each glycosylated (O-linked (GlcNAc) serine; alternate). Ser-20 carries the post-translational modification Phosphoserine. TPR repeat units follow at residues 21 to 54, 89 to 122, 123 to 156, 157 to 190, 191 to 224, 225 to 258, 259 to 292, 293 to 326, 327 to 360, 361 to 394, 395 to 428, and 429 to 462; these read FQGL…EPDN, AEAY…KPDF, IDGY…NPDL, YCVR…QPNF, AVAW…DPNF, LDAY…SPNH, AVVH…QPHF, PDAY…CPTH, ADSL…FPEF, AAAH…SPTF, ADAY…NPAF, and ADAH…KPDF. The O-linked (GlcNAc) serine; by autocatalysis glycan is linked to Ser-399. Thr-454 carries the post-translational modification Phosphothreonine. A TPR 13; truncated repeat occupies 463–473; sequence PDAYCNLAHCL. The DFP motif motif lies at 464-466; the sequence is DAY. Positions 487–503 match the Nuclear localization signal motif; it reads KKLVSIVADQLEKNRLP. The active-site Proton acceptor is His-508. UDP is bound by residues Gln-849, Lys-852, 906 to 908, 911 to 914, 930 to 932, and Asp-935; these read APK, HVRR, and HTT. Residue Tyr-989 is modified to Phosphotyrosine. Residues 991–1010 form a required for phosphatidylinositol 3,4,5-triphosphate binding region; it reads KKIRGKVWKQRISSPLFNTK.

This sequence belongs to the glycosyltransferase 41 family. O-GlcNAc transferase subfamily. As to quaternary structure, monomer; may exist in different oligomerization states in cells. Homotrimer, oligomerizes via TPR repeats 6 and 7. Trimerization is not necessary for activity in vitro, however it increases affinity for UDP-GlcNAc. Component of a THAP1/THAP3-HCFC1-OGT complex. Component of the NSL complex at least composed of MOF/KAT8, KANSL1, KANSL2, KANSL3, MCRS1, PHF20, OGT1/OGT, WDR5 and HCFC1. Found in a complex with KIF5B, RHOT1, RHOT2 and TRAK1. Found in a complex composed of at least SINHCAF, SIN3A, HDAC1, SAP30, RBBP4, OGT and TET1. Component of a complex composed of KMT2E/MLL5, OGT and USP7; the complex stabilizes KMT2E/MLL5, preventing KMT2E/MLL5 ubiquitination and proteasomal-mediated degradation. Interacts (via TPRs 1-6) with SIN3A; the interaction mediates transcriptional repression in parallel with histone deacetylase. Interacts (via TPR 5-6) with TET1, TET2 and TET3. Interacts (via TPR repeats 6 and 7) with ATXN10. Interacts with NSD2. Interacts with PROSER1; this interaction mediates TET2 O-GlcNAcylation and stability by promoting the interaction between OGT and TET2. In terms of processing, ubiquitinated by the SCF(FBXO31) complex, leading to its proteasomal degradation. Phosphorylation on Ser-3 or Ser-4 by GSK3-beta positively regulates its activity. Phosphorylation at Thr-454 by AMPK promotes nuclear localization. Post-translationally, glycosylated via autocatalysis; O-GlcNAcylation at Ser-399 promotes nuclear localization.

Its subcellular location is the nucleus. It is found in the cytoplasm. It carries out the reaction L-seryl-[protein] + UDP-N-acetyl-alpha-D-glucosamine = 3-O-(N-acetyl-beta-D-glucosaminyl)-L-seryl-[protein] + UDP + H(+). The enzyme catalyses L-threonyl-[protein] + UDP-N-acetyl-alpha-D-glucosamine = 3-O-(N-acetyl-beta-D-glucosaminyl)-L-threonyl-[protein] + UDP + H(+). It participates in protein modification; protein glycosylation. Inhibited by UDP. Functionally, catalyzes the transfer of a single N-acetylglucosamine from UDP-GlcNAc to a serine or threonine residue in cytoplasmic and nuclear proteins resulting in their modification with a beta-linked N-acetylglucosamine (O-GlcNAc). Glycosylates a large and diverse number of proteins including histone H2B, AKT1, AMPK, ATG4B, CAPRIN1, EZH2, FNIP1, GSDMD, KRT7, LMNA, LMNB1, LMNB2, RPTOR, HOXA1, PFKL, KMT2E/MLL5, MAPT/TAU, TET2, RBL2, RET, NOD2 and HCFC1. Can regulate their cellular processes via cross-talk between glycosylation and phosphorylation or by affecting proteolytic processing. Involved in insulin resistance in muscle and adipocyte cells via glycosylating insulin signaling components and inhibiting the 'Thr-308' phosphorylation of AKT1, enhancing IRS1 phosphorylation and attenuating insulin signaling. Involved in glycolysis regulation by mediating glycosylation of 6-phosphofructokinase PFKL, inhibiting its activity. Plays a key role in chromatin structure by mediating O-GlcNAcylation of 'Ser-112' of histone H2B: recruited to CpG-rich transcription start sites of active genes via its interaction with TET proteins (TET1, TET2 or TET3). As part of the NSL complex indirectly involved in acetylation of nucleosomal histone H4 on several lysine residues. O-GlcNAcylation of 'Ser-75' of EZH2 increases its stability, and facilitating the formation of H3K27me3 by the PRC2/EED-EZH2 complex. Stabilizes KMT2E/MLL5 by mediating its glycosylation, thereby preventing KMT2E/MLL5 ubiquitination. Regulates circadian oscillation of the clock genes and glucose homeostasis in the liver. Stabilizes clock proteins BMAL1 and CLOCK through O-glycosylation, which prevents their ubiquitination and subsequent degradation. Promotes the CLOCK-BMAL1-mediated transcription of genes in the negative loop of the circadian clock such as PER1/2 and CRY1/2. O-glycosylates HCFC1 and regulates its proteolytic processing and transcriptional activity. Component of a THAP1/THAP3-HCFC1-OGT complex that is required for the regulation of the transcriptional activity of RRM1. Regulates mitochondrial motility in neurons by mediating glycosylation of TRAK1. Promotes autophagy by mediating O-glycosylation of ATG4B. Acts as a regulator of mTORC1 signaling by mediating O-glycosylation of RPTOR and FNIP1: O-GlcNAcylation of RPTOR in response to glucose sufficiency promotes activation of the mTORC1 complex. In terms of biological role, catalyzes the transfer of a single N-acetylglucosamine from UDP-GlcNAc to a serine or threonine residue. Acts on cytoplasmic and nuclear proteins resulting in their modification with a beta-linked N-acetylglucosamine (O-GlcNAc). Glycosylates a large and diverse number of proteins including histone H2B, AKT1, ATG4B, EZH2, PFKL, KMT2E/MLL5, MAPT/TAU, NOD2 and HCFC1. Can regulate their cellular processes via cross-talk between glycosylation and phosphorylation or by affecting proteolytic processing. Probably by glycosylating KMT2E/MLL5, stabilizes KMT2E/MLL5 by preventing its ubiquitination. Involved in insulin resistance in muscle and adipocyte cells via glycosylating insulin signaling components and inhibiting the 'Thr-308' phosphorylation of AKT1, enhancing IRS1 phosphorylation and attenuating insulin signaling. Involved in glycolysis regulation by mediating glycosylation of 6-phosphofructokinase PFKL, inhibiting its activity. Component of a THAP1/THAP3-HCFC1-OGT complex that is required for the regulation of the transcriptional activity of RRM1. Plays a key role in chromatin structure by mediating O-GlcNAcylation of 'Ser-112' of histone H2B: recruited to CpG-rich transcription start sites of active genes via its interaction with TET proteins (TET1, TET2 or TET3). As part of the NSL complex indirectly involved in acetylation of nucleosomal histone H4 on several lysine residues. O-GlcNAcylation of 'Ser-75' of EZH2 increases its stability, and facilitating the formation of H3K27me3 by the PRC2/EED-EZH2 complex. Regulates circadian oscillation of the clock genes and glucose homeostasis in the liver. Stabilizes clock proteins BMAL1 and CLOCK through O-glycosylation, which prevents their ubiquitination and subsequent degradation. Promotes the CLOCK-BMAL1-mediated transcription of genes in the negative loop of the circadian clock such as PER1/2 and CRY1/2. O-glycosylates HCFC1 and regulates its proteolytic processing and transcriptional activity. Regulates mitochondrial motility in neurons by mediating glycosylation of TRAK1. Glycosylates HOXA1. O-glycosylates FNIP1. Promotes autophagy by mediating O-glycosylation of ATG4B. This Oryctolagus cuniculus (Rabbit) protein is UDP-N-acetylglucosamine--peptide N-acetylglucosaminyltransferase 110 kDa subunit (OGT).